The sequence spans 199 residues: Recombination protein RecR (199 aa).

The C4-type zinc finger occupies 57 to 72 (CSICGNITDEDPCAIC). One can recognise a Toprim domain in the interval 80–176 (STILVVEQPK…KVTRLAHGLS (97 aa)).

It belongs to the RecR family.

Its function is as follows. May play a role in DNA repair. It seems to be involved in an RecBC-independent recombinational process of DNA repair. It may act with RecF and RecO. This is Recombination protein RecR from Lacticaseibacillus casei (strain BL23) (Lactobacillus casei).